We begin with the raw amino-acid sequence, 138 residues long: Oleosin G (138 aa).

The next 3 membrane-spanning stretches (helical) occupy residues 14-34 (ILGF…TGLT), 48-68 (VLIF…VAVA), and 69-89 (GFLS…WLYN). The Proline-knot motif lies at 47-58 (PVLIFFSPILIP).

This sequence belongs to the oleosin family. Expressed in megagametophytes (at protein level).

Its subcellular location is the lipid droplet. It is found in the membrane. The sequence is that of Oleosin G from Pinus massoniana (Chinese red pine).